Here is a 324-residue protein sequence, read N- to C-terminus: MLEQGLLVTAGVAFLISVALSPLFIPFLRKLKFGQSIRDEGPKSHQKKSGTPTMGGIVIYVSMMVTTLIMAIKFEHLGAEVSLLLLVTFGYGLIGFLDDYIKVVKKRNLGLTSKQKLLGQLIIAIAFFAIAKGQGFDTHLMIPGTDITFDLYWAYFILVLFMLIGGSNAVNLTDGLDGLLSGTAAIAFGAFSIIAVAQEQYAVAIFCMAVVGAVLGFLVFNANPAKVFMGDTGSLALGGAIAAVAILLKQELLLVIIGGVFVMETLSVIIQVISFKTTGKRVFKMSPLHHHYELCGWSEWRVVVTFWSVGFLLAVLGIYIGVWM.

A run of 10 helical transmembrane segments spans residues 5 to 25 (GLLV…PLFI), 52 to 72 (PTMG…IMAI), 77 to 97 (LGAE…IGFL), 117 to 137 (LLGQ…QGFD), 147 to 167 (ITFD…IGGS), 176 to 196 (LDGL…IIAV), 202 to 222 (AVAI…VFNA), 227 to 247 (VFMG…VAIL), 253 to 273 (LLVI…IQVI), and 302 to 322 (VVVT…YIGV).

Belongs to the glycosyltransferase 4 family. MraY subfamily. It depends on Mg(2+) as a cofactor.

Its subcellular location is the cell membrane. It carries out the reaction UDP-N-acetyl-alpha-D-muramoyl-L-alanyl-gamma-D-glutamyl-meso-2,6-diaminopimeloyl-D-alanyl-D-alanine + di-trans,octa-cis-undecaprenyl phosphate = di-trans,octa-cis-undecaprenyl diphospho-N-acetyl-alpha-D-muramoyl-L-alanyl-D-glutamyl-meso-2,6-diaminopimeloyl-D-alanyl-D-alanine + UMP. It participates in cell wall biogenesis; peptidoglycan biosynthesis. Its function is as follows. Catalyzes the initial step of the lipid cycle reactions in the biosynthesis of the cell wall peptidoglycan: transfers peptidoglycan precursor phospho-MurNAc-pentapeptide from UDP-MurNAc-pentapeptide onto the lipid carrier undecaprenyl phosphate, yielding undecaprenyl-pyrophosphoryl-MurNAc-pentapeptide, known as lipid I. The protein is Phospho-N-acetylmuramoyl-pentapeptide-transferase of Bacillus cytotoxicus (strain DSM 22905 / CIP 110041 / 391-98 / NVH 391-98).